Consider the following 173-residue polypeptide: Photosystem I assembly protein Ycf3 (173 aa).

TPR repeat units lie at residues 35-68 (AFVY…EEDP), 72-105 (SYIL…NPRM), and 120-153 (GEKA…APNN).

This sequence belongs to the Ycf3 family.

The protein resides in the cellular thylakoid membrane. Its function is as follows. Essential for the assembly of the photosystem I (PSI) complex. May act as a chaperone-like factor to guide the assembly of the PSI subunits. The chain is Photosystem I assembly protein Ycf3 from Microcystis aeruginosa (strain NIES-843 / IAM M-2473).